We begin with the raw amino-acid sequence, 306 residues long: Probable arylamine N-acetyltransferase 3 (306 aa).

Residue C75 is the Acyl-thioester intermediate of the active site. Active-site residues include H115 and D130.

This sequence belongs to the arylamine N-acetyltransferase family.

The catalysed reaction is an arylamine + acetyl-CoA = an N-acetylarylamine + CoA. The chain is Probable arylamine N-acetyltransferase 3 from Dictyostelium discoideum (Social amoeba).